Here is a 234-residue protein sequence, read N- to C-terminus: Large ribosomal subunit protein uL1 (234 aa).

It belongs to the universal ribosomal protein uL1 family. In terms of assembly, part of the 50S ribosomal subunit.

In terms of biological role, binds directly to 23S rRNA. The L1 stalk is quite mobile in the ribosome, and is involved in E site tRNA release. Protein L1 is also a translational repressor protein, it controls the translation of the L11 operon by binding to its mRNA. The protein is Large ribosomal subunit protein uL1 of Syntrophobacter fumaroxidans (strain DSM 10017 / MPOB).